A 459-amino-acid polypeptide reads, in one-letter code: Glutamate--tRNA ligase 2 (459 aa).

Positions 8–18 (PSPTGYLHIGG) match the 'HIGH' region motif. Positions 237-241 (KLSKR) match the 'KMSKS' region motif. Lys-240 is a binding site for ATP.

The protein belongs to the class-I aminoacyl-tRNA synthetase family. Glutamate--tRNA ligase type 1 subfamily. Monomer.

Its subcellular location is the cytoplasm. The catalysed reaction is tRNA(Glu) + L-glutamate + ATP = L-glutamyl-tRNA(Glu) + AMP + diphosphate. Catalyzes the attachment of glutamate to tRNA(Glu) in a two-step reaction: glutamate is first activated by ATP to form Glu-AMP and then transferred to the acceptor end of tRNA(Glu). In Campylobacter concisus (strain 13826), this protein is Glutamate--tRNA ligase 2.